We begin with the raw amino-acid sequence, 165 residues long: Shikimate kinase (165 aa).

Residue 11 to 16 (GAGKTT) participates in ATP binding. Residue T15 coordinates Mg(2+). Substrate-binding residues include D33, R57, and G78. An ATP-binding site is contributed by R116. Residue R134 coordinates substrate.

This sequence belongs to the shikimate kinase family. Monomer. The cofactor is Mg(2+).

Its subcellular location is the cytoplasm. The enzyme catalyses shikimate + ATP = 3-phosphoshikimate + ADP + H(+). It functions in the pathway metabolic intermediate biosynthesis; chorismate biosynthesis; chorismate from D-erythrose 4-phosphate and phosphoenolpyruvate: step 5/7. Catalyzes the specific phosphorylation of the 3-hydroxyl group of shikimic acid using ATP as a cosubstrate. The protein is Shikimate kinase of Bacillus anthracis (strain A0248).